Consider the following 181-residue polypeptide: Large ribosomal subunit protein uL6 (181 aa).

It belongs to the universal ribosomal protein uL6 family. In terms of assembly, part of the 50S ribosomal subunit.

This protein binds to the 23S rRNA, and is important in its secondary structure. It is located near the subunit interface in the base of the L7/L12 stalk, and near the tRNA binding site of the peptidyltransferase center. The protein is Large ribosomal subunit protein uL6 of Synechococcus sp. (strain JA-2-3B'a(2-13)) (Cyanobacteria bacterium Yellowstone B-Prime).